The primary structure comprises 404 residues: Argininosuccinate synthase (404 aa).

Residues 10-18 (AYSGGVDTS) and Ala-38 each bind ATP. Tyr-89 provides a ligand contact to L-citrulline. Gly-119 provides a ligand contact to ATP. Positions 121, 125, and 126 each coordinate L-aspartate. Residue Asn-125 coordinates L-citrulline. L-citrulline contacts are provided by Arg-129, Ser-177, Ser-186, Glu-262, and Tyr-274.

This sequence belongs to the argininosuccinate synthase family. Type 1 subfamily. In terms of assembly, homotetramer.

It localises to the cytoplasm. It carries out the reaction L-citrulline + L-aspartate + ATP = 2-(N(omega)-L-arginino)succinate + AMP + diphosphate + H(+). Its pathway is amino-acid biosynthesis; L-arginine biosynthesis; L-arginine from L-ornithine and carbamoyl phosphate: step 2/3. The sequence is that of Argininosuccinate synthase from Prochlorococcus marinus (strain MIT 9215).